A 379-amino-acid polypeptide reads, in one-letter code: 1-deoxy-D-xylulose 5-phosphate reductoisomerase (379 aa).

Positions 10, 11, 12, 13, 38, 39, and 121 each coordinate NADPH. Residue Lys-122 coordinates 1-deoxy-D-xylulose 5-phosphate. Glu-123 contributes to the NADPH binding site. A Mn(2+)-binding site is contributed by Asp-147. 1-deoxy-D-xylulose 5-phosphate contacts are provided by Ser-148, Glu-149, Ser-173, and His-196. Mn(2+) is bound at residue Glu-149. NADPH is bound at residue Gly-202. 4 residues coordinate 1-deoxy-D-xylulose 5-phosphate: Ser-209, Asn-214, Lys-215, and Glu-218. Residue Glu-218 coordinates Mn(2+).

Belongs to the DXR family. The cofactor is Mg(2+). Mn(2+) serves as cofactor.

The enzyme catalyses 2-C-methyl-D-erythritol 4-phosphate + NADP(+) = 1-deoxy-D-xylulose 5-phosphate + NADPH + H(+). The protein operates within isoprenoid biosynthesis; isopentenyl diphosphate biosynthesis via DXP pathway; isopentenyl diphosphate from 1-deoxy-D-xylulose 5-phosphate: step 1/6. Catalyzes the NADPH-dependent rearrangement and reduction of 1-deoxy-D-xylulose-5-phosphate (DXP) to 2-C-methyl-D-erythritol 4-phosphate (MEP). This is 1-deoxy-D-xylulose 5-phosphate reductoisomerase from Chlamydia trachomatis serovar L2 (strain ATCC VR-902B / DSM 19102 / 434/Bu).